Reading from the N-terminus, the 380-residue chain is Transcription factor Sox-17-alpha-A (380 aa).

Disordered stretches follow at residues 1–20 and 40–59; these read MSSPDGGYASDDQNQGKCSV and GEGKLKSDAGSANSRSKAEA. A DNA-binding region (HMG box) is located at residues 61 to 129; it reads IRRPMNAFMV…QHMQDHPNYK (69 aa). One can recognise a Sox C-terminal domain in the interval 264–379; the sequence is VSPVQGMMAC…TAVYYCNYPS (116 aa). Residues 292 to 312 are disordered; that stretch reads HHQLHQAGQPSPPPEAQQMGR. A 9aaTAD motif is present at residues 328–336; that stretch reads TEFEQYLSY. The interval 329–334 is required for transcriptional activity and interaction with ctnnb1; the sequence is EFEQYL.

As to quaternary structure, interacts (via C-terminus) with ctnnb1/beta-catenin (via Armadillo repeats); this interaction is required for inhibition of wnt-signaling. As to expression, in early gastrulae, expressed in the vegetal but not animal hemisphere. The vegetal region is fated to become endoderm, and endodermal expression continues throughout gastrulation and neurulation. At tailbud stages, expression is down-regulated and becomes restricted to the most posterior endoderm and the future liver/gall bladder region. By 3-7 days, endodermal expression is restricted to the gall bladder bud. Also expressed in the embryonic gut, with strong expression in the posterior gut during tailbud stages, but by stage 40, expression rises again in the anterior gut. Expressed at a low level in the adult kidney and spleen.

Its subcellular location is the nucleus. Functionally, transcriptional activator. Binds to the DNA sequence 5'-AACAAT-3'. All of the sox17 proteins are required for embryonic endoderm development and gastrulation movements, and show some redundancy in function. In addition, the sox17 proteins have distinct but overlapping roles in later gut development. Acts downstream of vegt-signaling in endoderm differentiation to induce a range of endodermal genes both directly (including endodermin and dhh/chh) and indirectly. Also represses wnt-responsive genes to inhibit wnt/beta-catenin signaling. The protein is Transcription factor Sox-17-alpha-A (sox17a-a) of Xenopus laevis (African clawed frog).